The following is a 243-amino-acid chain: 4-hydroxy-tetrahydrodipicolinate reductase (243 aa).

Residues 9–14 (GANGKM), 78–80 (GTS), and 104–107 (APNF) each bind NAD(+). Residue His-134 is the Proton donor/acceptor of the active site. His-135 is a binding site for (S)-2,3,4,5-tetrahydrodipicolinate. Lys-138 acts as the Proton donor in catalysis. A (S)-2,3,4,5-tetrahydrodipicolinate-binding site is contributed by 144–145 (GT).

It belongs to the DapB family.

The protein resides in the cytoplasm. It catalyses the reaction (S)-2,3,4,5-tetrahydrodipicolinate + NAD(+) + H2O = (2S,4S)-4-hydroxy-2,3,4,5-tetrahydrodipicolinate + NADH + H(+). The enzyme catalyses (S)-2,3,4,5-tetrahydrodipicolinate + NADP(+) + H2O = (2S,4S)-4-hydroxy-2,3,4,5-tetrahydrodipicolinate + NADPH + H(+). The protein operates within amino-acid biosynthesis; L-lysine biosynthesis via DAP pathway; (S)-tetrahydrodipicolinate from L-aspartate: step 4/4. Catalyzes the conversion of 4-hydroxy-tetrahydrodipicolinate (HTPA) to tetrahydrodipicolinate. In Legionella pneumophila (strain Lens), this protein is 4-hydroxy-tetrahydrodipicolinate reductase.